A 100-amino-acid chain; its full sequence is Small ribosomal subunit protein uS14 (100 aa).

It belongs to the universal ribosomal protein uS14 family. Part of the 30S ribosomal subunit. Contacts proteins S3 and S10.

In terms of biological role, binds 16S rRNA, required for the assembly of 30S particles and may also be responsible for determining the conformation of the 16S rRNA at the A site. This chain is Small ribosomal subunit protein uS14, found in Prochlorococcus marinus subsp. pastoris (strain CCMP1986 / NIES-2087 / MED4).